Reading from the N-terminus, the 571-residue chain is Proline--tRNA ligase (571 aa).

The protein belongs to the class-II aminoacyl-tRNA synthetase family. ProS type 1 subfamily. In terms of assembly, homodimer.

It is found in the cytoplasm. It catalyses the reaction tRNA(Pro) + L-proline + ATP = L-prolyl-tRNA(Pro) + AMP + diphosphate. In terms of biological role, catalyzes the attachment of proline to tRNA(Pro) in a two-step reaction: proline is first activated by ATP to form Pro-AMP and then transferred to the acceptor end of tRNA(Pro). As ProRS can inadvertently accommodate and process non-cognate amino acids such as alanine and cysteine, to avoid such errors it has two additional distinct editing activities against alanine. One activity is designated as 'pretransfer' editing and involves the tRNA(Pro)-independent hydrolysis of activated Ala-AMP. The other activity is designated 'posttransfer' editing and involves deacylation of mischarged Ala-tRNA(Pro). The misacylated Cys-tRNA(Pro) is not edited by ProRS. In Pasteurella multocida (strain Pm70), this protein is Proline--tRNA ligase.